A 506-amino-acid polypeptide reads, in one-letter code: 2,3-bisphosphoglycerate-independent phosphoglycerate mutase (506 aa).

Mn(2+) contacts are provided by Asp-13 and Ser-63. Ser-63 functions as the Phosphoserine intermediate in the catalytic mechanism. Substrate is bound by residues His-124, 153-154 (RD), Arg-183, Arg-189, 254-257 (RADR), and Lys-330. The Mn(2+) site is built by Asp-396, His-400, Asp-437, His-438, and His-456.

The protein belongs to the BPG-independent phosphoglycerate mutase family. In terms of assembly, monomer. The cofactor is Mn(2+).

The catalysed reaction is (2R)-2-phosphoglycerate = (2R)-3-phosphoglycerate. It functions in the pathway carbohydrate degradation; glycolysis; pyruvate from D-glyceraldehyde 3-phosphate: step 3/5. Its function is as follows. Catalyzes the interconversion of 2-phosphoglycerate and 3-phosphoglycerate. The protein is 2,3-bisphosphoglycerate-independent phosphoglycerate mutase of Cereibacter sphaeroides (strain KD131 / KCTC 12085) (Rhodobacter sphaeroides).